A 422-amino-acid polypeptide reads, in one-letter code: UPF0761 membrane protein XAC0937 (422 aa).

6 helical membrane-spanning segments follow: residues 45–65, 102–122, 151–171, 179–199, 213–233, and 247–267; these read VFAL…FPAF, FTVA…HSIE, GTML…LPLF, LAEF…IVLI, ALPG…GFGF, and ALSA…SVLL.

The protein belongs to the UPF0761 family.

The protein localises to the cell inner membrane. The protein is UPF0761 membrane protein XAC0937 of Xanthomonas axonopodis pv. citri (strain 306).